Here is a 1096-residue protein sequence, read N- to C-terminus: Constitutive coactivator of PPAR-gamma-like protein 2 (1096 aa).

Residues 35-59 are compositionally biased toward low complexity; the sequence is QQQHLHRQLPPTAALAPGAPRAARG. Disordered stretches follow at residues 35-113, 508-579, and 971-1096; these read QQQH…PPQL, NYLP…DGEP, and SRSS…RKED. Position 58 is an omega-N-methylarginine (Arg-58). Basic residues predominate over residues 82-95; sequence TRHHHPAHHFHHHG. Positions 101-113 are enriched in pro residues; the sequence is LHPPLPPPPPPQL. Basic and acidic residues predominate over residues 540-559; it reads HITEAFHHQPEWGNPNRDRG. Position 977 is an omega-N-methylarginine (Arg-977). 2 stretches are compositionally biased toward basic and acidic residues: residues 1041–1050 and 1076–1096; these read IKEEKSDHRL and NREKNHLQEQKLETVAQRKED. Lys-1042 is covalently cross-linked (Glycyl lysine isopeptide (Lys-Gly) (interchain with G-Cter in SUMO2)).

The protein belongs to the constitutive coactivator of PPAR-gamma family. In terms of tissue distribution, expressed at low levels in a number of tissues.

In Homo sapiens (Human), this protein is Constitutive coactivator of PPAR-gamma-like protein 2 (FAM120C).